The primary structure comprises 264 residues: uncharacterized protein (264 aa).

A signal peptide spans 1–16 (MKGKSALTLLLAGIFS). The N-palmitoyl cysteine moiety is linked to residue C17. The S-diacylglycerol cysteine moiety is linked to residue C17.

The protein resides in the cell inner membrane. This is an uncharacterized protein from Escherichia coli (strain K12).